The sequence spans 414 residues: Succinylornithine transaminase (414 aa).

Position 260 is an N6-(pyridoxal phosphate)lysine (Lys260).

Belongs to the class-III pyridoxal-phosphate-dependent aminotransferase family. AstC subfamily. Pyridoxal 5'-phosphate is required as a cofactor.

It catalyses the reaction N(2)-succinyl-L-ornithine + 2-oxoglutarate = N-succinyl-L-glutamate 5-semialdehyde + L-glutamate. The protein operates within amino-acid degradation; L-arginine degradation via AST pathway; L-glutamate and succinate from L-arginine: step 3/5. Its function is as follows. Catalyzes the transamination of N(2)-succinylornithine and alpha-ketoglutarate into N(2)-succinylglutamate semialdehyde and glutamate. Can also act as an acetylornithine aminotransferase. The polypeptide is Succinylornithine transaminase (Yersinia pestis bv. Antiqua (strain Antiqua)).